The primary structure comprises 534 residues: Probable inorganic phosphate transporter 1-8 (534 aa).

Over 1 to 21 the chain is Cytoplasmic; sequence MPIKVLSSLDVARTQWYHFKA. The chain crosses the membrane as a helical span at residues 22–42; it reads IIVAGMGLFTDAYDLFCIAPV. Over 43–61 the chain is Extracellular; that stretch reads MKMISHVYYNGDSINTAVL. Residues 62–82 form a helical membrane-spanning segment; that stretch reads STSYAIALLGTATGQLVFGYL. The Cytoplasmic segment spans residues 83-90; that stretch reads GDRVGRRR. Residues 91-111 traverse the membrane as a helical segment; the sequence is VYGLCLIIMILSSFGCGFSVC. Residues 112–123 lie on the Extracellular side of the membrane; that stretch reads TTRRSCVMVSLG. A helical membrane pass occupies residues 124–144; the sequence is FFRFFLGLGIGGDYPLSATIM. The Cytoplasmic portion of the chain corresponds to 145–153; the sequence is SEFANKRTR. A helical transmembrane segment spans residues 154 to 174; sequence GAFIAAVFSMQGLGILVSSAV. Residues 175-199 lie on the Extracellular side of the membrane; the sequence is TMAVCVAFKRSGGGLEVDAAAPTEA. Residues 200 to 220 traverse the membrane as a helical segment; it reads DLAWRLILMIGALPAALTFYW. Over 221-281 the chain is Cytoplasmic; it reads RMLMPETARY…KLFSRCFFRL (61 aa). Residues 282–302 traverse the membrane as a helical segment; that stretch reads HGRDLFAASFNWFLVDIVFYT. The Extracellular portion of the chain corresponds to 303 to 333; sequence SNLLLSHIFSHYSKKPSTAENVYDAAFEVAE. Residues 334 to 354 traverse the membrane as a helical segment; the sequence is LGAIIAACSTIPGYWFTVYFI. Residues 355-361 are Cytoplasmic-facing; it reads DKIGRVK. A helical transmembrane segment spans residues 362–382; it reads IQIMGFFFMAVIYLVAGIPYS. Residues 383 to 396 are Extracellular-facing; that stretch reads WYWSKHEHNNKGFM. A helical transmembrane segment spans residues 397–417; it reads VLYGLVFFFCNFGPNTTTFII. At 418 to 431 the chain is on the cytoplasmic side; sequence PAEHFPARFRSTCH. A helical membrane pass occupies residues 432–452; that stretch reads GISGAAGKLGAIVGTVGFLWA. The Extracellular segment spans residues 453-472; that stretch reads TKKMESDDKNQIYPEVNRMR. A helical membrane pass occupies residues 473 to 493; that stretch reads IAFLILGGVCIAGILVTYFFT. Topologically, residues 494–534 are cytoplasmic; it reads KETMGRSLEENEHDQDNNAESEDEPQIVDGQSSVSTLLQTR. The interval 501-534 is disordered; that stretch reads LEENEHDQDNNAESEDEPQIVDGQSSVSTLLQTR. A compositionally biased stretch (acidic residues) spans 510 to 519; that stretch reads NNAESEDEPQ. Position 514 is a phosphoserine (Ser-514). The segment covering 522–534 has biased composition (polar residues); that stretch reads DGQSSVSTLLQTR.

It belongs to the major facilitator superfamily. Phosphate:H(+) symporter (TC 2.A.1.9) family. As to expression, in roots.

Its subcellular location is the membrane. Its function is as follows. High-affinity transporter for external inorganic phosphate. The chain is Probable inorganic phosphate transporter 1-8 (PHT1-8) from Arabidopsis thaliana (Mouse-ear cress).